A 404-amino-acid chain; its full sequence is Coenzyme F(430) synthetase (404 aa).

Residue 112–117 (GVKGKT) coordinates ATP.

Belongs to the MurCDEF family.

It carries out the reaction 15,17(3)-seco-F430-17(3)-acid + ATP = coenzyme F430 + ADP + phosphate. Its function is as follows. Involved in the biosynthesis of the unique nickel-containing tetrapyrrole coenzyme F430, the prosthetic group of methyl-coenzyme M reductase (MCR), which plays a key role in methanogenesis and anaerobic methane oxidation. Catalyzes the activation the g-propionate side chain of 15,17(3)-seco-F430-17(3)-acid (seco-F430) for intramolecular C-C bond formation to yield the carbocyclic F ring of coenzyme F430. The protein is Coenzyme F(430) synthetase of Methanocaldococcus jannaschii (strain ATCC 43067 / DSM 2661 / JAL-1 / JCM 10045 / NBRC 100440) (Methanococcus jannaschii).